The following is an 886-amino-acid chain: MVWGTGYGNPSPLNPYGFASLHRGGLNPLILAPENITFDTLNTHNDHEETHGESPEVPKASIAPAGRQNVPVLQQNQENEDNHALGGSEDAKDEREIRFSAIKTLYNYYSEGPSTPIMPHLVNRLRGLDALAKIDATLTKVDMNAAYIFALRPTFPYSYGYKQRFSNRRLTTSALCYARTGLSSFLTVDKTYTSNSPLKGGSRGWPIFNVDVSSHVAEPHMRTLSPIGLEVFNLATSQFSKTLLTASSKVFTQSLYTADILSIFGEVFLPHVMQPVSNYTPILVRALLALIHILGPGSGNCSLSSSIFESSIPQFLTVSHSTNMSNRTRYCLHTRSAYKDMFRNGIPPQSTLPPTLAPEGSSARVLIPEALVTSPMFPWLLILVSSGPQFFLYSKDASINTVDIGSRGRITSPIPDVAKLDLHRLWNLFRFDGYRYIDVVIVGADRDYVWPYQNGVYVHGGKGPNGTGNYGNADVHDGIGTIFSSFNNNVNVQTSDLMLGLLTLWNHITTTYATEEEVTMAIKIAAAFALVYPVQPIVYSGCPKAFQRHTSYYQPSSENCYATDTAEVKSVWDTVELSVQVNNAMVLGMTLPFGQPTLSSAQWYNNIDKAEISMFKVGNLPLQNLDYLSLDMMEFYAPTTGQLYDIRSDNLILSAHRTVNLGIGYTALADFFAYLASVPAQSFYHDRMVTSPISKQTYSVYERFIERFIDDFVGWDRCDLFNLDTLLGAKHIAGVASSPIPWHCSLQRCPLPIIMHYTGLTFGQEHITVRDVAGVEGLQQIVMRDFQGRIVVERLGTAAPSRIAVKLDWSRLSAWYSDTTCAIPLSDRVMEIVNYAAIWDPTQERHAQVSCTHTLAPISFRALTCLSLYSIRVSTLHHLMTTRAKL.

Residue Met1 is modified to N-acetylmethionine; by host. Residues 42 to 61 (NTHNDHEETHGESPEVPKAS) are disordered. Positions 44–56 (HNDHEETHGESPE) are enriched in basic and acidic residues.

The protein belongs to the totivirus major capsid protein family. Acetylation is necessary for viral assembly.

The protein resides in the virion. Capsid protein self-assembles to form an icosahedral capsid with a T=2 symmetry, 35 nm in diameter, and consisting of 60 capsid proteins asymmetric dimers. The capsid encapsulates the genomic dsRNA and the polymerase and remains intact following cell entry to protect the dsRNA from degradation and to prevent unfavorable antiviral responses in the host cell during all the replication cycle of the virus. Nascent transcripts are transcribed within the structural confines of the virion and are extruded into the cytoplasm. Its function is as follows. Binds and removes 5' cap structures from cellular mRNA. The protein is Major capsid protein (gag) of Giardia lamblia virus (isolate Wang) (GLV).